The sequence spans 209 residues: Uracil phosphoribosyltransferase (209 aa).

Residues Arg-79, Arg-104, and 131–139 each bind 5-phospho-alpha-D-ribose 1-diphosphate; that span reads DPMLATGGS. Residues Ile-194 and 199–201 contribute to the uracil site; that span reads GDA. Asp-200 serves as a coordination point for 5-phospho-alpha-D-ribose 1-diphosphate.

Belongs to the UPRTase family. Mg(2+) is required as a cofactor.

The catalysed reaction is UMP + diphosphate = 5-phospho-alpha-D-ribose 1-diphosphate + uracil. It functions in the pathway pyrimidine metabolism; UMP biosynthesis via salvage pathway; UMP from uracil: step 1/1. Its activity is regulated as follows. Allosterically activated by GTP. Functionally, catalyzes the conversion of uracil and 5-phospho-alpha-D-ribose 1-diphosphate (PRPP) to UMP and diphosphate. This is Uracil phosphoribosyltransferase from Alkaliphilus oremlandii (strain OhILAs) (Clostridium oremlandii (strain OhILAs)).